The sequence spans 305 residues: tRNA uridine(34) hydroxylase (305 aa).

The region spanning S126 to S220 is the Rhodanese domain. Residue C180 is the Cysteine persulfide intermediate of the active site.

It belongs to the TrhO family.

It catalyses the reaction uridine(34) in tRNA + AH2 + O2 = 5-hydroxyuridine(34) in tRNA + A + H2O. Functionally, catalyzes oxygen-dependent 5-hydroxyuridine (ho5U) modification at position 34 in tRNAs. The polypeptide is tRNA uridine(34) hydroxylase (Trichormus variabilis (strain ATCC 29413 / PCC 7937) (Anabaena variabilis)).